Consider the following 428-residue polypeptide: Tubby-like F-box protein 5 (428 aa).

The interval 17–65 (IGSMSRRAADGRAGGGRGGSRHSWPVLWSEQQQPPQQQQLQRQEHQQQQ) is disordered. The span at 47-65 (QQQPPQQQQLQRQEHQQQQ) shows a compositional bias: low complexity. One can recognise an F-box domain in the interval 65-117 (QGRWANLPPELLLDVIQRVEASEATWPARRQVVACAAVCRSWREVTKEVVKTL).

This sequence belongs to the TUB family. As to expression, ubiquitous.

The polypeptide is Tubby-like F-box protein 5 (TULP5) (Oryza sativa subsp. japonica (Rice)).